Reading from the N-terminus, the 228-residue chain is RING1 and YY1-binding protein (228 aa).

Disordered stretches follow at residues 1-21 (MTMG…PAAD), 47-157 (RKGT…STAQ), and 172-228 (DFKE…DESF). A RanBP2-type zinc finger spans residues 21–50 (DEGFWDCSVCTFRNSAEAFKCSICDVRKGT). The span at 76 to 98 (PKKEKKEKVEKPDKEKPEKDKDI) shows a compositional bias: basic and acidic residues. Residue Lys-77 forms a Glycyl lysine isopeptide (Lys-Gly) (interchain with G-Cter in SUMO2) linkage. Ser-99 bears the Phosphoserine mark. Basic and acidic residues predominate over residues 113 to 122 (PKSDILKDPP). Phosphoserine is present on residues Ser-123, Ser-127, and Ser-130. The span at 124–143 (EANSIQSANATTKTSETNHT) shows a compositional bias: polar residues. An interaction with GABPB1 and FANK1 region spans residues 143–226 (TSRPRLKNVD…KGDMSAVNDE (84 aa)). Positions 179 to 204 (SSSTSSSTVTSSAGSEQQNQSSSGSE) are enriched in low complexity. Ser-227 is modified (phosphoserine).

Monomer. Component of repressive BCOR complex containing Polycomb group subcomplex at least composed of BCOR, PCGF1, RING1 and RNF2/RING2. Component of PCR1-like complexes. Interacts with PCGF1. Part of a PCR1-like complex that contains AUTS2, PCGF5, RNF2, CSNK2B and RYBP. Interacts with RNF2; the interaction is direct. Interacts with CBX2, YAF2, RING1 and RNF2. Interacts with ubiquitin and ubiquitinated proteins. Interacts with ubiquitinated histone H2A. Interacts with apoptin, DEDD, FADD, CASP8, CASP10, YY1 and GABPB1. Together with GABPB1 and YY1, it forms a ternary complex, probably being the bridge factor between these two transcription factors. Interacts with MDM2, and thereby inhibits ubiquitination of TP53. Identified in a ternary complex containing MDM2, TP53 and RYBP. Interacts with FANK1; may prevent the ubiquitin-mediated proteasomal degradation of FANK1. Interacts with IFT57. Monoubiquitinated. In terms of tissue distribution, expressed in embryonic stem cells.

It localises to the nucleus. The protein resides in the cytoplasm. Its subcellular location is the nucleoplasm. In terms of biological role, component of a Polycomb group (PcG) multiprotein PRC1-like complex, a complex class required to maintain the transcriptionally repressive state of many genes, including Hox genes, throughout development. PcG PRC1-like complex acts via chromatin remodeling and modification of histones; it mediates monoubiquitination of histone H2A 'Lys-119', rendering chromatin heritably changed in its expressibility. Component of a PRC1-like complex that mediates monoubiquitination of histone H2A 'Lys-119' on the X chromosome and is required for normal silencing of one copy of the X chromosome in XX females. May stimulate ubiquitination of histone H2A 'Lys-119' by recruiting the complex to target sites. Inhibits ubiquitination and subsequent degradation of TP53, and thereby plays a role in regulating transcription of TP53 target genes. May also regulate the ubiquitin-mediated proteasomal degradation of other proteins like FANK1 to regulate apoptosis. May be implicated in the regulation of the transcription as a repressor of the transcriptional activity of E4TF1. May bind to DNA. May play a role in the repression of tumor growth and metastasis in breast cancer by down-regulating SRRM3. In Mus musculus (Mouse), this protein is RING1 and YY1-binding protein (Rybp).